The chain runs to 428 residues: Probable mitochondrial adenine nucleotide transporter BTL3 (428 aa).

3 Solcar repeats span residues 129–212, 222–307, and 336–421; these read LNTT…YRGQ, TTNF…LKSA, and LGPM…MKVV. The next 6 membrane-spanning stretches (helical) occupy residues 132 to 152, 187 to 207, 228 to 248, 283 to 303, 342 to 362, and 390 to 410; these read TKHL…IAPL, GNLV…YAYD, FVAG…LDTI, LVPS…VYDI, LLYG…FEVV, and VPAL…SAAI.

Belongs to the mitochondrial carrier (TC 2.A.29) family.

It is found in the mitochondrion inner membrane. In terms of biological role, probable mitochondrial adenylate carrier that catalyzes the transport of ATP, ADP and AMP. The sequence is that of Probable mitochondrial adenine nucleotide transporter BTL3 from Arabidopsis thaliana (Mouse-ear cress).